We begin with the raw amino-acid sequence, 227 residues long: Albumin-2 (227 aa).

Hemopexin repeat units follow at residues 3 to 46 (PGYI…GPTP), 61 to 111 (SYGI…FPFF), 117 to 165 (ESGI…YPCF), and 171 to 221 (ESGA…WPSL). N7 and D65 together coordinate Ca(2+). S118 is a binding site for spermine. Ca(2+) is bound by residues D121 and D175.

As to quaternary structure, monomer and homodimer. Dimers are prevalent in solution.

It is found in the cytoplasm. The protein resides in the cytosol. In terms of biological role, may play a role in response to oxidative stress and polyamine biosynthesis. The monomeric form binds one hemin per monomer. In the dimeric form, about half of the dimers bind one molecule of spermine each under physiological conditions. Ligand binding is mutually exclusive as binding of hemin leads to dissociation of the dimer. This chain is Albumin-2, found in Lathyrus sativus (White vetchling).